Here is a 130-residue protein sequence, read N- to C-terminus: Small ribosomal subunit protein uS8 (130 aa).

It belongs to the universal ribosomal protein uS8 family. As to quaternary structure, part of the 30S ribosomal subunit. Contacts proteins S5 and S12.

Functionally, one of the primary rRNA binding proteins, it binds directly to 16S rRNA central domain where it helps coordinate assembly of the platform of the 30S subunit. The chain is Small ribosomal subunit protein uS8 from Klebsiella pneumoniae subsp. pneumoniae (strain ATCC 700721 / MGH 78578).